We begin with the raw amino-acid sequence, 244 residues long: 1-(5-phosphoribosyl)-5-[(5-phosphoribosylamino)methylideneamino] imidazole-4-carboxamide isomerase (244 aa).

Asp-8 acts as the Proton acceptor in catalysis. Catalysis depends on Asp-129, which acts as the Proton donor.

The protein belongs to the HisA/HisF family.

It is found in the cytoplasm. It carries out the reaction 1-(5-phospho-beta-D-ribosyl)-5-[(5-phospho-beta-D-ribosylamino)methylideneamino]imidazole-4-carboxamide = 5-[(5-phospho-1-deoxy-D-ribulos-1-ylimino)methylamino]-1-(5-phospho-beta-D-ribosyl)imidazole-4-carboxamide. Its pathway is amino-acid biosynthesis; L-histidine biosynthesis; L-histidine from 5-phospho-alpha-D-ribose 1-diphosphate: step 4/9. The sequence is that of 1-(5-phosphoribosyl)-5-[(5-phosphoribosylamino)methylideneamino] imidazole-4-carboxamide isomerase from Allorhizobium ampelinum (strain ATCC BAA-846 / DSM 112012 / S4) (Agrobacterium vitis (strain S4)).